Reading from the N-terminus, the 765-residue chain is MSSARDLIKVDIEWGMERLVRAQQVVELRPYDIESWSVMIREAQTRPIHEVRSLYESLVNVFPTTARYWKLYIEMEMRSRYYERVEKLFQRCLVKILNIDLWKLYLTYVKETKSGLSTHKEKMAQAYDFALEKIGMDLHSFSIWQDYIYFLRGVEAVGNYAENQKITAVRRVYQKAVVTPIVGIEQLWKDYIAFEQNINPIISEKMSLERSKDYMNARRVAKELEYHTKGLNRNLPAVPPTLTKEEVKQVELWKRFITYEKSNPLRTEDTALVTRRVMFATEQCLLVLTHHPAVWHQASQFLDTSARVLTEKGVRTSVENISPILCVPVVNQIEWVMAFAWWWAKDVQAAKIFADECANILERSINGVLNRNALLYFAYADFEEGRLKYEKVHTMYNKLLQLPDIDPTLVYVQYMKFARRAEGIKSARSIFKKAREDVRSRYHIFVAAALMEYYCSKDKEIAFRIFELGLKRFGGSPEYVMCYIDYLSHLNEDNNTRVLFERVLSSGGLSPHKSVEVWNRFLEFESNIGDLSSIVKVERRRSAVFENLKEYEGKETAQLVDRYKFLDLYPCTSTELKSIGYAENVGIILNKVGGGAQSQNTGEVETDSEATPPLPRPDFSQMIPFKPRPCAHPGAHPLAGGVFPQPPALAALCATLPPPNSFRGPFVSVELLFDIFMRLNLPDSAPQPNGDNELSPKIFDLAKSVHWIVDTSTYTGVQHSVTAVPPRRRRLLPGGDDSDDELQTAVPPSHDIYRLRQLKRFAKSN.

7 HAT repeats span residues 46 to 78 (RPIHEVRSLYESLVNVFPTTARYWKLYIEMEMR), 80 to 111 (RYYERVEKLFQRCLVKILNIDLWKLYLTYVKE), 118 to 153 (THKEKMAQAYDFALEKIGMDLHSFSIWQDYIYFLRG), 164 to 197 (QKITAVRRVYQKAVVTPIVGIEQLWKDYIAFEQN), 230 to 262 (GLNRNLPAVPPTLTKEEVKQVELWKRFITYEKS), 387 to 420 (LKYEKVHTMYNKLLQLPDIDPTLVYVQYMKFARR), and 491 to 527 (NEDNNTRVLFERVLSSGGLSPHKSVEVWNRFLEFESN). 2 disordered regions span residues 595–615 (GAQSQNTGEVETDSEATPPLP) and 727–747 (RRRRLLPGGDDSDDELQTAVP). At Ser-738 the chain carries Phosphoserine.

As to quaternary structure, probably interacts with an RNA-binding protein.

It localises to the nucleus. Essential protein, may play a role in mRNA production or stability. The chain is Protein suppressor of forked (su(f)) from Drosophila melanogaster (Fruit fly).